We begin with the raw amino-acid sequence, 167 residues long: Histidinol dehydrogenase (167 aa).

Residues glutamine 109 and histidine 112 each contribute to the Zn(2+) site.

The protein belongs to the histidinol dehydrogenase family. In terms of assembly, homodimer. Zn(2+) is required as a cofactor.

The enzyme catalyses L-histidinol + 2 NAD(+) + H2O = L-histidine + 2 NADH + 3 H(+). It functions in the pathway amino-acid biosynthesis; L-histidine biosynthesis; L-histidine from 5-phospho-alpha-D-ribose 1-diphosphate: step 9/9. In terms of biological role, catalyzes the sequential NAD-dependent oxidations of L-histidinol to L-histidinaldehyde and then to L-histidine. This is Histidinol dehydrogenase (hisD) from Salmonella enteritidis.